Consider the following 153-residue polypeptide: Nuclear cap-binding protein subunit 2 (153 aa).

Residues Y17, Y40, 109–113 (RTDWD), 120–124 (RQYGR), and 130–131 (QV) contribute to the mRNA site. The RRM domain occupies 37–115 (CTLYVGNLSF…RIIRTDWDAG (79 aa)).

Belongs to the RRM NCBP2 family. In terms of assembly, component of the nuclear cap-binding complex (CBC), a heterodimer composed of ncbp1/cbp80 and ncbp2/cbp20 that interacts with m7GpppG-capped RNA.

It localises to the nucleus. The protein localises to the cytoplasm. Component of the cap-binding complex (CBC), which binds co-transcriptionally to the 5' cap of pre-mRNAs and is involved in various processes such as pre-mRNA splicing, translation regulation, nonsense-mediated mRNA decay, RNA-mediated gene silencing (RNAi) by microRNAs (miRNAs) and mRNA export. The CBC complex is involved in mRNA export from the nucleus, leading to the recruitment of the mRNA export machinery to the 5' end of mRNA and to mRNA export in a 5' to 3' direction through the nuclear pore. The CBC complex is also involved in mediating U snRNA and intronless mRNAs export from the nucleus. The CBC complex is essential for a pioneer round of mRNA translation, before steady state translation when the CBC complex is replaced by cytoplasmic cap-binding protein eIF4E. The pioneer round of mRNA translation mediated by the CBC complex plays a central role in nonsense-mediated mRNA decay (NMD), NMD only taking place in mRNAs bound to the CBC complex, but not on eIF4E-bound mRNAs. The CBC complex enhances NMD in mRNAs containing at least one exon-junction complex (EJC), promoting the interaction between upf1 and upf2. The CBC complex is also involved in 'failsafe' NMD, which is independent of the EJC complex, while it does not participate in Staufen-mediated mRNA decay (SMD). During cell proliferation, the CBC complex is also involved in microRNAs (miRNAs) biogenesis via its interaction with srrt/ars2, thereby being required for miRNA-mediated RNA interference. The CBC complex also acts as a negative regulator of parn, thereby acting as an inhibitor of mRNA deadenylation. In the CBC complex, ncbp2/cbp20 recognizes and binds capped RNAs (m7GpppG-capped RNA) but requires ncbp1/cbp80 to stabilize the movement of its N-terminal loop and lock the CBC into a high affinity cap-binding state with the cap structure. The conventional cap-binding complex with NCBP2 binds both small nuclear RNA (snRNA) and messenger (mRNA) and is involved in their export from the nucleus. The sequence is that of Nuclear cap-binding protein subunit 2 (ncbp2) from Xenopus tropicalis (Western clawed frog).